A 131-amino-acid polypeptide reads, in one-letter code: uncharacterized protein (131 aa).

A run of 4 helical transmembrane segments spans residues 7-29, 49-69, 76-98, and 102-124; these read LLKF…SLLY, LVKV…LIAL, LILI…LFTY, and ELSE…FLYL.

It is found in the cell membrane. This is an uncharacterized protein from Aquifex aeolicus (strain VF5).